A 1317-amino-acid chain; its full sequence is DNA-directed RNA polymerase subunit beta' (1317 aa).

4 residues coordinate Zn(2+): Cys60, Cys62, Cys75, and Cys78. Residues Asp535, Asp537, and Asp539 each coordinate Mg(2+). Residues Cys890, Cys967, Cys974, and Cys977 each contribute to the Zn(2+) site.

Belongs to the RNA polymerase beta' chain family. As to quaternary structure, the RNAP catalytic core consists of 2 alpha, 1 beta, 1 beta' and 1 omega subunit. When a sigma factor is associated with the core the holoenzyme is formed, which can initiate transcription. It depends on Mg(2+) as a cofactor. Zn(2+) serves as cofactor.

The catalysed reaction is RNA(n) + a ribonucleoside 5'-triphosphate = RNA(n+1) + diphosphate. Functionally, DNA-dependent RNA polymerase catalyzes the transcription of DNA into RNA using the four ribonucleoside triphosphates as substrates. This chain is DNA-directed RNA polymerase subunit beta', found in Nocardia farcinica (strain IFM 10152).